A 365-amino-acid polypeptide reads, in one-letter code: Isopentenyl-diphosphate delta-isomerase (365 aa).

Position 4–5 (4–5) interacts with substrate; it reads RK. FMN contacts are provided by residues 62 to 64, S92, and N121; that span reads GMT. 92–94 is a substrate binding site; sequence SQR. Q155 is a substrate binding site. Position 156 (E156) interacts with Mg(2+). FMN is bound by residues K187, T216, 267-269, and 288-289; these read GVR and AL.

It belongs to the IPP isomerase type 2 family. Homooctamer. Dimer of tetramers. Requires FMN as cofactor. It depends on NADPH as a cofactor. The cofactor is Mg(2+).

Its subcellular location is the cytoplasm. It carries out the reaction isopentenyl diphosphate = dimethylallyl diphosphate. Involved in the biosynthesis of isoprenoids. Catalyzes the 1,3-allylic rearrangement of the homoallylic substrate isopentenyl (IPP) to its allylic isomer, dimethylallyl diphosphate (DMAPP). The sequence is that of Isopentenyl-diphosphate delta-isomerase from Methanopyrus kandleri (strain AV19 / DSM 6324 / JCM 9639 / NBRC 100938).